The sequence spans 234 residues: Small ribosomal subunit protein uS3 (234 aa).

The KH type-2 domain maps to 39–107; sequence IRKYVKKELY…EIAVNIKEER (69 aa). The span at 213–222 shows a compositional bias: basic and acidic residues; that stretch reads PTEKAEETTS. The segment at 213–234 is disordered; the sequence is PTEKAEETTSKPKRRPAKKRGK. Basic residues predominate over residues 223–234; sequence KPKRRPAKKRGK.

This sequence belongs to the universal ribosomal protein uS3 family. In terms of assembly, part of the 30S ribosomal subunit. Forms a tight complex with proteins S10 and S14.

Functionally, binds the lower part of the 30S subunit head. Binds mRNA in the 70S ribosome, positioning it for translation. The polypeptide is Small ribosomal subunit protein uS3 (Aliarcobacter butzleri (strain RM4018) (Arcobacter butzleri)).